The following is a 238-amino-acid chain: DNA repair protein RecO (238 aa).

It belongs to the RecO family.

In terms of biological role, involved in DNA repair and RecF pathway recombination. The chain is DNA repair protein RecO from Aliivibrio fischeri (strain ATCC 700601 / ES114) (Vibrio fischeri).